Consider the following 95-residue polypeptide: Putative per-hexamer repeat protein 4 (95 aa).

This chain is Putative per-hexamer repeat protein 4 (Phxr4), found in Mus musculus (Mouse).